The chain runs to 269 residues: uncharacterized protein (269 aa).

8 helical membrane passes run 9–29 (YIIG…AHLF), 50–70 (FMLG…IVPL), 82–102 (FSII…VWAF), 107–127 (LYWT…MYGQ), 147–167 (LVFG…LHCT), 173–193 (VFSN…ILGF), 200–220 (LVSA…HLFA), and 224–244 (IFAF…FLLP).

It is found in the membrane. This is an uncharacterized protein from Schizosaccharomyces pombe (strain 972 / ATCC 24843) (Fission yeast).